A 997-amino-acid polypeptide reads, in one-letter code: Kinesin-like protein KIF19 (997 aa).

One can recognise a Kinesin motor domain in the interval 11-346 (QLMVALRVRP…LTYAGRAKNI (336 aa)). 104–111 (GPTGCGKT) contributes to the ATP binding site. The stretch at 361–388 (IAQYTSIIADLRGEIQRLKCKIDQQAGR) forms a coiled coil. Basic and acidic residues predominate over residues 477-494 (EERRKESYTKEDSEKDSD). Disordered regions lie at residues 477–509 (EERRKESYTKEDSEKDSDTGDEPDNLEPPEVAS), 665–704 (KITPAGATLTPDSDLESVKTLSSEAQRPQNNTLPPLGTDS), 718–759 (QVKS…SSEN), and 784–997 (AAQR…LQHN). Residues 506-551 (EVASARENIAALVGEQKKLRKEKLALEQRCRELRARGRRLEETLPR) adopt a coiled-coil conformation. A compositionally biased stretch (polar residues) spans 683–697 (KTLSSEAQRPQNNTL). Positions 750-759 (INSSPESSEN) are enriched in low complexity. 2 stretches are compositionally biased toward polar residues: residues 835 to 851 (TLQHAISEDNLSSSTGE) and 950 to 959 (PNQNTGSGNP).

The protein belongs to the TRAFAC class myosin-kinesin ATPase superfamily. Kinesin family. As to expression, strongly expressed in the oviduct and trachea. Expressed in testis, lung, ovary and brain.

The protein resides in the cytoplasm. The protein localises to the cytoskeleton. It localises to the cell projection. It is found in the cilium. Functionally, plus end-directed microtubule-dependent motor protein that regulates the length of motile cilia by mediating depolymerization of microtubules at ciliary tips. The sequence is that of Kinesin-like protein KIF19 (Kif19) from Mus musculus (Mouse).